Reading from the N-terminus, the 98-residue chain is MIGERIYKVLLGPHISEKATIVAEGNGQYVFRVTGDATKPEIKQAIEALFEVKVESVRTLNHKGKTKRTVRGLGKRKDVKKAYVRLAEGQDIDFMVAE.

This sequence belongs to the universal ribosomal protein uL23 family. Part of the 50S ribosomal subunit. Contacts protein L29, and trigger factor when it is bound to the ribosome.

One of the early assembly proteins it binds 23S rRNA. One of the proteins that surrounds the polypeptide exit tunnel on the outside of the ribosome. Forms the main docking site for trigger factor binding to the ribosome. This chain is Large ribosomal subunit protein uL23, found in Marinomonas sp. (strain MWYL1).